The primary structure comprises 619 residues: Chaperone protein HscA homolog (619 aa).

The protein belongs to the heat shock protein 70 family.

Chaperone involved in the maturation of iron-sulfur cluster-containing proteins. Has a low intrinsic ATPase activity which is markedly stimulated by HscB. This Shewanella frigidimarina (strain NCIMB 400) protein is Chaperone protein HscA homolog.